The sequence spans 546 residues: 2-isopropylmalate synthase (546 aa).

The 264-residue stretch at 8–271 (ILIFDTTLRD…NSFFGRSSDS (264 aa)) folds into the Pyruvate carboxyltransferase domain. Mn(2+) contacts are provided by aspartate 17, histidine 208, histidine 210, and asparagine 244. Residues 408–546 (QLSHVQVSCG…KNKVLSNPKK (139 aa)) form a regulatory domain region.

It belongs to the alpha-IPM synthase/homocitrate synthase family. LeuA type 1 subfamily. Homodimer. Mn(2+) is required as a cofactor.

The protein localises to the cytoplasm. The enzyme catalyses 3-methyl-2-oxobutanoate + acetyl-CoA + H2O = (2S)-2-isopropylmalate + CoA + H(+). It functions in the pathway amino-acid biosynthesis; L-leucine biosynthesis; L-leucine from 3-methyl-2-oxobutanoate: step 1/4. Functionally, catalyzes the condensation of the acetyl group of acetyl-CoA with 3-methyl-2-oxobutanoate (2-ketoisovalerate) to form 3-carboxy-3-hydroxy-4-methylpentanoate (2-isopropylmalate). This Prochlorococcus marinus subsp. pastoris (strain CCMP1986 / NIES-2087 / MED4) protein is 2-isopropylmalate synthase.